Reading from the N-terminus, the 191-residue chain is Pyridoxal 5'-phosphate synthase subunit PdxT (191 aa).

46–48 (GES) provides a ligand contact to L-glutamine. The active-site Nucleophile is the cysteine 78. L-glutamine contacts are provided by residues arginine 105 and 133–134 (IR). Active-site charge relay system residues include histidine 169 and glutamate 171.

The protein belongs to the glutaminase PdxT/SNO family. In terms of assembly, in the presence of PdxS, forms a dodecamer of heterodimers. Only shows activity in the heterodimer.

The catalysed reaction is aldehydo-D-ribose 5-phosphate + D-glyceraldehyde 3-phosphate + L-glutamine = pyridoxal 5'-phosphate + L-glutamate + phosphate + 3 H2O + H(+). The enzyme catalyses L-glutamine + H2O = L-glutamate + NH4(+). It functions in the pathway cofactor biosynthesis; pyridoxal 5'-phosphate biosynthesis. Its function is as follows. Catalyzes the hydrolysis of glutamine to glutamate and ammonia as part of the biosynthesis of pyridoxal 5'-phosphate. The resulting ammonia molecule is channeled to the active site of PdxS. In Fervidobacterium nodosum (strain ATCC 35602 / DSM 5306 / Rt17-B1), this protein is Pyridoxal 5'-phosphate synthase subunit PdxT.